Consider the following 148-residue polypeptide: Snaclec B4 (148 aa).

An N-terminal signal peptide occupies residues M1–A24. 3 cysteine pairs are disulfide-bonded: C27-C38, C55-C144, and C121-C136. Residues Y34–K145 enclose the C-type lectin domain.

It belongs to the snaclec family. As to quaternary structure, heterodimer; disulfide-linked. In terms of tissue distribution, expressed by the venom gland.

It is found in the secreted. Functionally, interferes with one step of hemostasis (modulation of platelet aggregation, or coagulation cascade, for example). The chain is Snaclec B4 from Macrovipera lebetinus (Levantine viper).